A 466-amino-acid polypeptide reads, in one-letter code: Soluble pyridine nucleotide transhydrogenase (466 aa).

36-45 (ERYQNVGGGC) contacts FAD.

This sequence belongs to the class-I pyridine nucleotide-disulfide oxidoreductase family. FAD is required as a cofactor.

It localises to the cytoplasm. It catalyses the reaction NAD(+) + NADPH = NADH + NADP(+). In terms of biological role, conversion of NADPH, generated by peripheral catabolic pathways, to NADH, which can enter the respiratory chain for energy generation. This is Soluble pyridine nucleotide transhydrogenase from Escherichia coli O6:K15:H31 (strain 536 / UPEC).